We begin with the raw amino-acid sequence, 297 residues long: Probable oxidoreductase (297 aa).

9 to 33 is a binding site for NAD(+); sequence VVTGGASGLGAETVRALAAAGAEVT. Ser-138 contacts substrate. Tyr-164 functions as the Proton acceptor in the catalytic mechanism.

The protein belongs to the short-chain dehydrogenases/reductases (SDR) family.

This chain is Probable oxidoreductase, found in Streptomyces lividans.